We begin with the raw amino-acid sequence, 449 residues long: HSPB1-associated protein 1 homolog (449 aa).

The JmjC domain occupies 102 to 266; sequence WAYADYKYIA…DEARVAEALT (165 aa). A compositionally biased stretch (basic and acidic residues) spans 385–395; that stretch reads DQDKLRSDNKL. The tract at residues 385 to 416 is disordered; sequence DQDKLRSDNKLGQRSGQSVLQDTENPGGSGEM. Positions 396–410 are enriched in polar residues; the sequence is GQRSGQSVLQDTENP.

It localises to the cytoplasm. Its function is as follows. May play a role in cellular stress response. The polypeptide is HSPB1-associated protein 1 homolog (hspbap1) (Danio rerio (Zebrafish)).